Here is a 654-residue protein sequence, read N- to C-terminus: Fructose-1,6-bisphosphatase class 3 (654 aa).

Positions 288-307 (NPAFKPKKRPDKHERLTQRE) are disordered. A compositionally biased stretch (basic and acidic residues) spans 298-307 (DKHERLTQRE).

This sequence belongs to the FBPase class 3 family. Mn(2+) is required as a cofactor.

It carries out the reaction beta-D-fructose 1,6-bisphosphate + H2O = beta-D-fructose 6-phosphate + phosphate. It participates in carbohydrate biosynthesis; gluconeogenesis. This chain is Fructose-1,6-bisphosphatase class 3, found in Staphylococcus aureus (strain USA300).